The chain runs to 621 residues: MNNDINSSVESLNSACNMQSDTDTAPLLEDGQHASNQGAASSSRGQPQASPRQKMQRSQPVHILRRLQEEDQQLRTASLPAIPNPFPELTGAAPGSPPSVAPSSLPPPPSQPPAKHCGRCEKWIPGENTRGNGKRKIWRWQFPPGFQLSKLTRPGLWTKTTARFSKKQPKNQCPTDTVNPVARMPTSQMEKLRLRKDVKVFSEDGTSKVVEILTDMTARDLCQLLVYKSHCVDDNSWTLVEHHPQLGLERCLEDHEIVVQVESTMPSESKFLFRKNYAKYEFFKNPVNFFPDQMVNWCQQSNGGQAQLLQNFLNTSSCPEIQGFLQVKEVGRKSWKKLYVCLRRSGLYYSTKGTSKEPRHLQLLADLEESSIFYLIAGKKQYNAPNEHGMCIKPNKAKTEMKELRLLCAEDEQIRTCWMTAFRLLKYGMLLYQNYRIPQRKGLPPPFNAPMRSVSENSLVAMDFSGQIGRVIDNPAEAQSAALEEGHAWRKRSTRMNILSSQSPLHPSTLNAVIHRTQHWFHGRISREESHRIIKQQGLVDGLFLLRDSQSNPKAFVLTLCHHQKIKNFQILPCEDDGQTFFTLDDGNTKFSDLIQLVDFYQLNKGVLPCKLKHHCIRVAL.

Composition is skewed to polar residues over residues 1–23 (MNND…SDTD) and 33–59 (HASN…QRSQ). Residues 1-118 (MNNDINSSVE…PSQPPAKHCG (118 aa)) are disordered. Phosphoserine occurs at positions 50 and 96. The segment covering 95 to 112 (GSPPSVAPSSLPPPPSQP) has biased composition (pro residues). The 85-residue stretch at 194–278 (LRKDVKVFSE…SKFLFRKNYA (85 aa)) folds into the Ras-associating domain. The PH domain occupies 318–427 (CPEIQGFLQV…WMTAFRLLKY (110 aa)). S455 is modified (phosphoserine; by MTOR and PKB/AKT1). Phosphoserine occurs at positions 458 and 503. The 82-residue stretch at 520–601 (WFHGRISREE…SDLIQLVDFY (82 aa)) folds into the SH2 domain.

The protein belongs to the GRB7/10/14 family. In terms of assembly, interacts with ligand-activated tyrosine kinase receptors, including FGFR1, INSR, IGF1R, MET and PDGFRB in a phosphotyrosine-dependent manner through the SH2 domain. Poorly binds to the EGFR. Directly interacts with MAP3K14/NIK and is recruited to the EGFR-ERBB2 complex. Interacts with GIGYF1/PERQ1 and GIGYF2/TNRC15. When unphosphorylated, interacts with AKT1 and when phosphorylated with YWHAE/14-3-3 epsilon. Interacts with NEDD4. Interacts with LRP6, thus interfering with the binding of AXIN1 to LRP6. Binds to activated NRAS. Post-translationally, phosphorylated on serine residues upon EGF, FGF and PDGF stimulation. Widely expressed.

The protein resides in the cytoplasm. With respect to regulation, phosphorylation by mTORC1 stabilizes and activates GRB10 constituting a feedback pathway by which mTORC1 inhibits INSR-dependent signaling. Adapter protein which modulates coupling of a number of cell surface receptor kinases with specific signaling pathways. Binds to, and suppress signals from, activated receptors tyrosine kinases, including the insulin (INSR) and insulin-like growth factor (IGF1R) receptors. The inhibitory effect can be achieved by 2 mechanisms: interference with the signaling pathway and increased receptor degradation. Delays and reduces AKT1 phosphorylation in response to insulin stimulation. Blocks association between INSR and IRS1 and IRS2 and prevents insulin-stimulated IRS1 and IRS2 tyrosine phosphorylation. Recruits NEDD4 to IGF1R, leading to IGF1R ubiquitination, increased internalization and degradation by both the proteasomal and lysosomal pathways. A similar role in the mediation of ubiquitination also has been suggested with INSR. Negatively regulates Wnt signaling by interacting with LRP6 intracellular portion and interfering with the binding of AXIN1 to LRP6. Positive regulator of the KDR/VEGFR-2 signaling pathway. May inhibit NEDD4-mediated degradation of KDR/VEGFR-2. This chain is Growth factor receptor-bound protein 10 (Grb10), found in Mus musculus (Mouse).